We begin with the raw amino-acid sequence, 551 residues long: Methionine--tRNA ligase (551 aa).

Residues P12–H22 carry the 'HIGH' region motif. The Zn(2+) site is built by C144, C147, C157, and C160. The short motif at Q330 to S334 is the 'KMSKS' region element. ATP is bound at residue K333.

Belongs to the class-I aminoacyl-tRNA synthetase family. MetG type 1 subfamily. Monomer. Requires Zn(2+) as cofactor.

Its subcellular location is the cytoplasm. It catalyses the reaction tRNA(Met) + L-methionine + ATP = L-methionyl-tRNA(Met) + AMP + diphosphate. Functionally, is required not only for elongation of protein synthesis but also for the initiation of all mRNA translation through initiator tRNA(fMet) aminoacylation. The chain is Methionine--tRNA ligase from Chlamydia abortus (strain DSM 27085 / S26/3) (Chlamydophila abortus).